A 278-amino-acid polypeptide reads, in one-letter code: 4-deoxy-L-threo-5-hexosulose-uronate ketol-isomerase (278 aa).

Zn(2+) contacts are provided by His196, His198, Glu203, and His245.

Belongs to the KduI family. Zn(2+) serves as cofactor.

The catalysed reaction is 5-dehydro-4-deoxy-D-glucuronate = 3-deoxy-D-glycero-2,5-hexodiulosonate. It participates in glycan metabolism; pectin degradation; 2-dehydro-3-deoxy-D-gluconate from pectin: step 4/5. In terms of biological role, catalyzes the isomerization of 5-dehydro-4-deoxy-D-glucuronate to 3-deoxy-D-glycero-2,5-hexodiulosonate. In Edwardsiella ictaluri (strain 93-146), this protein is 4-deoxy-L-threo-5-hexosulose-uronate ketol-isomerase.